Here is a 173-residue protein sequence, read N- to C-terminus: Calcium-binding protein 5 (173 aa).

EF-hand domains follow at residues 28–63 (DELD…MGYM), 82–99 (GRVD…KLLA), 105–140 (IGVQ…LLGE), and 142–173 (LTPR…MMSR). The Ca(2+) site is built by Asp41, Asp43, Asp45, and Asp52. Positions 118, 120, 122, 124, 129, 155, 157, 159, 161, and 166 each coordinate Ca(2+).

Interacts with CACNA1C (via C-terminal CDB motif) in a calcium-dependent manner. Interacts with STXBP1. Interacts with MYO6. Expressed in inner and outer plexiform layers of the retina, and retinal bipolar cells (at protein level). Expressed in the inner hair cells (IHC) of the cochlea.

The protein resides in the cytoplasm. In terms of biological role, inhibits calcium-dependent inactivation of L-type calcium channel and shifts voltage dependence of activation to more depolarized membrane potentials. Involved in the transmission of light signals. May positively regulate neurotransmitter vesicle endocytosis and exocytosis in a salt-dependent manner. May play a role in the extension and network organization of neurites. This Mus musculus (Mouse) protein is Calcium-binding protein 5 (Cabp5).